The chain runs to 283 residues: MEGMDIDLDQELMQKFSCMGTTDKDVLVSEFQRLLGFQLNPAGCAFFLDMTNWNLQAAIGAYYDFESPNINTPSMSFVEDVTIGEGESVPPDTPFTKTWRIQNTGTESWPPGVCLKYVGGDQFGHVNMVMVRSLDPQEISDVSVQMRSPAVPGMYQGQWRMCTATGLFYGDVIWVILSVEEGGLLGVTQQLSSFKTEFNTQPHRSLEGDYNPFASPQKNKQDTNEDHLKDPGGPWEAPLDSIQQDQNGLNHSSVNITPNGLQNNLSVVTYSQGINGPFPFGQS.

The disordered stretch occupies residues 198 to 254 (FNTQPHRSLEGDYNPFASPQKNKQDTNEDHLKDPGGPWEAPLDSIQQDQNGLNHSSV). The segment covering 219 to 230 (NKQDTNEDHLKD) has biased composition (basic and acidic residues). A compositionally biased stretch (polar residues) spans 241 to 254 (SIQQDQNGLNHSSV).

Its subcellular location is the cytoplasm. The protein resides in the nucleus. Functionally, may have a roles as negative regulator of innate antiviral response. This chain is Protein ILRUN (ilrun), found in Danio rerio (Zebrafish).